The primary structure comprises 324 residues: Quinolinate synthase (324 aa).

Positions 39 and 56 each coordinate iminosuccinate. C101 provides a ligand contact to [4Fe-4S] cluster. Residues 127-129 (YIN) and S144 contribute to the iminosuccinate site. C187 serves as a coordination point for [4Fe-4S] cluster. Iminosuccinate-binding positions include 213–215 (HPE) and T230. Residue C280 participates in [4Fe-4S] cluster binding.

The protein belongs to the quinolinate synthase family. Type 2 subfamily. It depends on [4Fe-4S] cluster as a cofactor.

It localises to the cytoplasm. The enzyme catalyses iminosuccinate + dihydroxyacetone phosphate = quinolinate + phosphate + 2 H2O + H(+). Its pathway is cofactor biosynthesis; NAD(+) biosynthesis; quinolinate from iminoaspartate: step 1/1. In terms of biological role, catalyzes the condensation of iminoaspartate with dihydroxyacetone phosphate to form quinolinate. The polypeptide is Quinolinate synthase (Nostoc punctiforme (strain ATCC 29133 / PCC 73102)).